A 379-amino-acid polypeptide reads, in one-letter code: Proton extrusion protein PxcA (379 aa).

Transmembrane regions (helical) follow at residues 153-173 (TLVS…LQQI), 254-274 (AIKN…VCLF), 300-320 (FVII…GWTV), and 337-357 (FIDL…KYWI).

It belongs to the CemA family.

It localises to the cell inner membrane. Functionally, required for H(+) efflux immediately after light irradiation to form a rapid H(+) concentration gradient across the thylakoid membranes. Together with PxcL, contributes to transient H(+) uptake following dark to light transition. The sequence is that of Proton extrusion protein PxcA from Synechococcus sp. (strain RCC307).